The primary structure comprises 196 residues: ATP-dependent Clp protease proteolytic subunit (196 aa).

Serine 101 (nucleophile) is an active-site residue. Histidine 126 is a catalytic residue.

Belongs to the peptidase S14 family. Component of the chloroplastic Clp protease core complex.

It localises to the plastid. The protein resides in the chloroplast stroma. The enzyme catalyses Hydrolysis of proteins to small peptides in the presence of ATP and magnesium. alpha-casein is the usual test substrate. In the absence of ATP, only oligopeptides shorter than five residues are hydrolyzed (such as succinyl-Leu-Tyr-|-NHMec, and Leu-Tyr-Leu-|-Tyr-Trp, in which cleavage of the -Tyr-|-Leu- and -Tyr-|-Trp bonds also occurs).. In terms of biological role, cleaves peptides in various proteins in a process that requires ATP hydrolysis. Has a chymotrypsin-like activity. Plays a major role in the degradation of misfolded proteins. The sequence is that of ATP-dependent Clp protease proteolytic subunit from Aethionema cordifolium (Lebanon stonecress).